Reading from the N-terminus, the 296-residue chain is 4-hydroxy-tetrahydrodipicolinate synthase (296 aa).

Residue Thr49 participates in pyruvate binding. The Proton donor/acceptor role is filled by Tyr137. The active-site Schiff-base intermediate with substrate is Lys165. Residue Ile207 coordinates pyruvate.

This sequence belongs to the DapA family. Homotetramer; dimer of dimers.

The protein resides in the cytoplasm. It carries out the reaction L-aspartate 4-semialdehyde + pyruvate = (2S,4S)-4-hydroxy-2,3,4,5-tetrahydrodipicolinate + H2O + H(+). It participates in amino-acid biosynthesis; L-lysine biosynthesis via DAP pathway; (S)-tetrahydrodipicolinate from L-aspartate: step 3/4. Catalyzes the condensation of (S)-aspartate-beta-semialdehyde [(S)-ASA] and pyruvate to 4-hydroxy-tetrahydrodipicolinate (HTPA). This chain is 4-hydroxy-tetrahydrodipicolinate synthase, found in Rhodopseudomonas palustris (strain BisA53).